The chain runs to 277 residues: Putative ankyrin repeat protein L81 (277 aa).

ANK repeat units lie at residues 150–179 (FGQT…DLHQ) and 183–215 (QGRS…DLYQ).

The chain is Putative ankyrin repeat protein L81 from Acanthamoeba polyphaga (Amoeba).